The primary structure comprises 249 residues: MRQLIAGNWKMNGLRSTSESLLQALRDAAPHALRNCDMLICPPATLIAQAASVLAGSGIEVGAQDCHMARSGAHTGDLSAEMLVEAGAHWVILGHSERRRDHGELSETVREKVIAARQFGLTPIVCVGETEDERASGRETEIVGWQIKGSLPDGFAADSNGVIAYEPVWAIGTGRTATVEDVAMMHAFIREELVRQFGEAGRGVRILYGGSVKPENAASLLRVPEVGGALVGGASLSAQDFLAIAEASA.

Residue 8-10 (NWK) participates in substrate binding. H95 acts as the Electrophile in catalysis. The active-site Proton acceptor is E166. Substrate contacts are provided by residues G172, S211, and 232 to 233 (GG).

Belongs to the triosephosphate isomerase family. In terms of assembly, homodimer.

The protein resides in the cytoplasm. The enzyme catalyses D-glyceraldehyde 3-phosphate = dihydroxyacetone phosphate. Its pathway is carbohydrate biosynthesis; gluconeogenesis. The protein operates within carbohydrate degradation; glycolysis; D-glyceraldehyde 3-phosphate from glycerone phosphate: step 1/1. Involved in the gluconeogenesis. Catalyzes stereospecifically the conversion of dihydroxyacetone phosphate (DHAP) to D-glyceraldehyde-3-phosphate (G3P). This is Triosephosphate isomerase from Granulibacter bethesdensis (strain ATCC BAA-1260 / CGDNIH1).